The sequence spans 1032 residues: Serine/threonine-protein kinase ppk31 (1032 aa).

The 70-residue stretch at asparagine 3 to serine 72 folds into the PAS domain. Residues phenylalanine 528–phenylalanine 877 enclose the Protein kinase domain. ATP contacts are provided by residues isoleucine 534–valine 542 and lysine 557. Aspartate 652 serves as the catalytic Proton acceptor. A disordered region spans residues proline 938–threonine 963. Over residues threonine 947 to alanine 957 the composition is skewed to low complexity.

This sequence belongs to the protein kinase superfamily. Ser/Thr protein kinase family.

The protein localises to the cytoplasm. The enzyme catalyses L-seryl-[protein] + ATP = O-phospho-L-seryl-[protein] + ADP + H(+). It catalyses the reaction L-threonyl-[protein] + ATP = O-phospho-L-threonyl-[protein] + ADP + H(+). In terms of biological role, has a role in meiosis. The sequence is that of Serine/threonine-protein kinase ppk31 (ppk31) from Schizosaccharomyces pombe (strain 972 / ATCC 24843) (Fission yeast).